A 155-amino-acid chain; its full sequence is UPF0178 protein Gmet_1725 (155 aa).

It belongs to the UPF0178 family.

The chain is UPF0178 protein Gmet_1725 from Geobacter metallireducens (strain ATCC 53774 / DSM 7210 / GS-15).